The sequence spans 521 residues: Ribonuclease Y (521 aa).

The helical transmembrane segment at 10-30 (LIITAGVSIALAIVAFFLGYL) threads the bilayer. The KH domain occupies 210–270 (TVSVVTLPND…IRREIAKLTL (61 aa)). Residues 336 to 430 (VLAHSIEVAN…IQAADSVSAA (95 aa)) form the HD domain.

This sequence belongs to the RNase Y family.

It localises to the cell membrane. Functionally, endoribonuclease that initiates mRNA decay. The polypeptide is Ribonuclease Y (Caldicellulosiruptor saccharolyticus (strain ATCC 43494 / DSM 8903 / Tp8T 6331)).